The sequence spans 299 residues: Taste receptor type 2 member 19 (299 aa).

A topological domain (extracellular) is located at residue Met-1. The chain crosses the membrane as a helical span at residues 2 to 22 (MCFLLIILSILVVFAFVLGNF). Over 23–55 (SNGFIALVNVIDWVNTRKISSADQILTALVVSR) the chain is Cytoplasmic. The chain crosses the membrane as a helical span at residues 56–76 (IGLLWVMLFLWYATVFNSALY). At 77–87 (GLEVRIVASNA) the chain is on the extracellular side. A helical transmembrane segment spans residues 88 to 108 (WAVMNHFSIWLAASLSIFCLL). At 109-127 (KIANFSNLIFLHLKKRIKS) the chain is on the cytoplasmic side. Residues 128–148 (VVLVILLGPLVFLICNLAVIT) traverse the membrane as a helical segment. Topologically, residues 149–181 (MDERVWTKEYEGNVTWKIKLRNAIQLSSLTVTT) are extracellular. N-linked (GlcNAc...) asparagine glycosylation occurs at Asn-161. The helical transmembrane segment at 182–202 (LANLIPFTLSLICFLLLICSL) threads the bilayer. Residues 203–226 (CKHLKKMRLHSKGSQDPSTKVHIK) lie on the Cytoplasmic side of the membrane. A helical transmembrane segment spans residues 227-247 (ALQTVTSFLMLFAIYFLCIIT). Residues 248-259 (STWNLRTQQSKL) lie on the Extracellular side of the membrane. The helical transmembrane segment at 260-280 (VLLLCQTVAIMYPSFHSFILI) threads the bilayer. The Cytoplasmic portion of the chain corresponds to 281-299 (MGSRKLKQTFLSVLWQMTR).

Belongs to the G-protein coupled receptor T2R family.

The protein localises to the membrane. Its function is as follows. Receptor that may play a role in the perception of bitterness and is gustducin-linked. May play a role in sensing the chemical composition of the gastrointestinal content. The activity of this receptor may stimulate alpha gustducin, mediate PLC-beta-2 activation and lead to the gating of TRPM5. The chain is Taste receptor type 2 member 19 (TAS2R19) from Pan paniscus (Pygmy chimpanzee).